The chain runs to 138 residues: MLSPKRTKYRKAHKGRIHGNAKGGTTLNFGTFGLKALEPERITARQIEAARRAITRAMKRAGRVWIRIFPDLPVSTKPAEVRMGSGKGSPEYWVARVHPGRVMFEIDGVAPELAREALALGAAKLPIKTKFIVRSVDA.

Residues 1–19 are compositionally biased toward basic residues; the sequence is MLSPKRTKYRKAHKGRIHG. The interval 1–21 is disordered; it reads MLSPKRTKYRKAHKGRIHGNA.

The protein belongs to the universal ribosomal protein uL16 family. As to quaternary structure, part of the 50S ribosomal subunit.

Binds 23S rRNA and is also seen to make contacts with the A and possibly P site tRNAs. This is Large ribosomal subunit protein uL16 from Granulibacter bethesdensis (strain ATCC BAA-1260 / CGDNIH1).